Reading from the N-terminus, the 1250-residue chain is Immunoglobulin superfamily DCC subclass member 4 (1250 aa).

Positions 1–24 (MARGDAGRGRGLLALTFCLLAARG) are cleaved as a signal peptide. The Extracellular portion of the chain corresponds to 25-957 (ELLLPQETTV…SDSLDMHSVT (933 aa)). Ig-like C2-type domains follow at residues 29-137 (PQET…TAVV), 143-229 (ADFS…ALLS), 242-330 (QDVV…AELR), and 335-421 (PAIT…ASLA). Cys57 and Cys121 are oxidised to a cystine. Residues Asn90, Asn102, and Asn157 are each glycosylated (N-linked (GlcNAc...) asparagine). A disulfide bridge connects residues Cys164 and Cys212. N-linked (GlcNAc...) asparagine glycosylation is present at Asn252. 2 disulfide bridges follow: Cys265-Cys312 and Cys356-Cys405. Fibronectin type-III domains are found at residues 431 to 525 (APTR…TLDD), 527 to 623 (PSAA…TPSM), 632 to 741 (APAE…APAP), 752 to 845 (PPAH…TLPD), and 850 to 945 (PPSD…TLQE). Asn582 is a glycosylation site (N-linked (GlcNAc...) asparagine). The helical transmembrane segment at 958 to 978 (GIIVGVCLGLLCLLACMCAGL) threads the bilayer. Over 979–1250 (RRSPHRESLP…LPRSPVSSSA (272 aa)) the chain is Cytoplasmic. Thr995 carries the post-translational modification Phosphothreonine. Disordered stretches follow at residues 1140 to 1175 (SASN…DPGQ) and 1215 to 1250 (PGEV…SSSA).

It belongs to the immunoglobulin superfamily. DCC family.

It is found in the cell membrane. The sequence is that of Immunoglobulin superfamily DCC subclass member 4 (IGDCC4) from Homo sapiens (Human).